A 355-amino-acid polypeptide reads, in one-letter code: Uroporphyrinogen decarboxylase (355 aa).

Residues 27 to 31 (RQAGR), aspartate 78, tyrosine 155, threonine 210, and histidine 328 each bind substrate.

This sequence belongs to the uroporphyrinogen decarboxylase family. Homodimer.

The protein localises to the cytoplasm. It carries out the reaction uroporphyrinogen III + 4 H(+) = coproporphyrinogen III + 4 CO2. Its pathway is porphyrin-containing compound metabolism; protoporphyrin-IX biosynthesis; coproporphyrinogen-III from 5-aminolevulinate: step 4/4. Its function is as follows. Catalyzes the decarboxylation of four acetate groups of uroporphyrinogen-III to yield coproporphyrinogen-III. This Pseudomonas fluorescens (strain SBW25) protein is Uroporphyrinogen decarboxylase.